The sequence spans 415 residues: Meiotic driver wtf36 (415 aa).

Disordered regions lie at residues 1-49 and 67-99; these read MKNK…DLNN and TTPP…SGTA. The segment covering 11-29 has biased composition (basic and acidic residues); it reads SMDEMSAKNDNEIDLEKGP. The next 7 helical transmembrane spans lie at 105–125, 142–162, 169–189, 205–225, 240–260, 274–294, and 298–318; these read FLIK…PAVC, WTLF…LTYF, AVKV…IFLA, VTAI…AQCV, VVII…RSKF, CSIS…FWTL, and FSGL…TKGL.

The protein belongs to the WTF family. As to quaternary structure, homomer. Forms protein aggregates. The two isoforms can interact with each other and with themselves. High sequence similarity is required for their interaction.

The protein resides in the spore membrane. Its subcellular location is the vacuole membrane. It is found in the ascus epiplasm. It localises to the cytoplasm. The protein localises to the endoplasmic reticulum membrane. Functionally, promotes unequal transmission of alleles from the parental zygote to progeny spores by acting as poison/antidote system where the poison and antidote proteins are produced from the same locus; the poison component is trans-acting and targets all spores within an ascus whereas the antidote component is spore-specific, leading to poisoning of all progeny that do not inherit the allele. In terms of biological role, localizes isoform 2 to the vacuole thereby facilitating its degradation. Its function is as follows. Forms toxic aggregates that disrupt spore maturation. The protein is Meiotic driver wtf36 of Schizosaccharomyces pombe (Fission yeast).